Here is a 342-residue protein sequence, read N- to C-terminus: Transcription initiation factor TFIID subunit 12 (342 aa).

Residues 1–221 (MKMEEFSPPT…QAPPPQMIPA (221 aa)) form a disordered region. Residues 12-35 (PNNHVIVQANPQIAAALSTNSPMQ) are compositionally biased toward polar residues. Low complexity-rich tracts occupy residues 39–59 (PPQGHQNPNEQQQQQQFVGQP), 67–89 (PMRMQMPQQQIRQMPYPSPQMRA), 96–146 (QQQQ…HLMG), and 180–192 (QQIMQVQHQQQHQ). Residues 193–218 (QPPPSQQIQQPPIPQPQQQQAPPPQM) show a composition bias toward pro residues. In terms of domain architecture, Histone-fold spans 230 to 297 (EKSKLDDLMQ…EFILKNVYNM (68 aa)).

This sequence belongs to the TAF12 family. Interacts (via histone-fold domain) with taf-4 (via the histone-fold domain). Interaction may facilitate the nuclear localization of taf-4.

The protein localises to the nucleus. In terms of biological role, part of the general transcription factor complex TFIID. Plays a role in recruiting taf-4 to the nucleus and thereby activating transcription initiation by RNA polymerase II, as part of the TFIID complex. The chain is Transcription initiation factor TFIID subunit 12 from Caenorhabditis elegans.